The following is a 280-amino-acid chain: Elongation factor Ts (280 aa).

Residues 82-85 (TDFV) are involved in Mg(2+) ion dislocation from EF-Tu.

Belongs to the EF-Ts family.

Its subcellular location is the cytoplasm. Associates with the EF-Tu.GDP complex and induces the exchange of GDP to GTP. It remains bound to the aminoacyl-tRNA.EF-Tu.GTP complex up to the GTP hydrolysis stage on the ribosome. This is Elongation factor Ts from Baumannia cicadellinicola subsp. Homalodisca coagulata.